Consider the following 188-residue polypeptide: Large ribosomal subunit protein eL18 (188 aa).

It belongs to the eukaryotic ribosomal protein eL18 family.

The protein resides in the cytoplasm. This chain is Large ribosomal subunit protein eL18 (RpL18), found in Drosophila melanogaster (Fruit fly).